Reading from the N-terminus, the 883-residue chain is Serine/threonine-protein kinase greatwall (883 aa).

Met1 carries the N-acetylmethionine modification. The Protein kinase domain occupies 35–839; that stretch reads FTIVKPISRG…IKELKCHPLF (805 aa). ATP-binding positions include 41-49 and Lys62; that span reads ISRGAFGKV. Asp156 serves as the catalytic Proton acceptor. Phosphothreonine occurs at positions 209 and 224. Ser295, Ser373, and Ser456 each carry phosphoserine. Thr523 carries the phosphothreonine modification. Residues Ser555, Ser559, Ser634, Ser661, and Ser672 each carry the phosphoserine modification. Phosphothreonine is present on Thr726. Position 729 is a phosphoserine (Ser729). Thr745 carries the phosphothreonine; by CDK1 modification. In terms of domain architecture, AGC-kinase C-terminal spans 840–883; sequence SDVDWENLQHQTMPFIPQPDDETDTSYFEARNNAQHLTVSGFSL. Ser879 and Ser882 each carry phosphoserine.

It belongs to the protein kinase superfamily. AGC Ser/Thr protein kinase family. In terms of processing, phosphorylation at Thr-745 by CDK1 during M phase activates its kinase activity. Maximum phosphorylation occurs in prometaphase.

Its subcellular location is the cytoplasm. The protein resides in the cytoskeleton. It is found in the microtubule organizing center. The protein localises to the centrosome. It localises to the nucleus. The catalysed reaction is L-seryl-[protein] + ATP = O-phospho-L-seryl-[protein] + ADP + H(+). The enzyme catalyses L-threonyl-[protein] + ATP = O-phospho-L-threonyl-[protein] + ADP + H(+). Its function is as follows. Serine/threonine kinase that plays a key role in M phase by acting as a regulator of mitosis entry and maintenance. Acts by promoting the inactivation of protein phosphatase 2A (PP2A) during M phase: does not directly inhibit PP2A but acts by mediating phosphorylation and subsequent activation of ARPP19 and ENSA at 'Ser-62' and 'Ser-67', respectively. ARPP19 and ENSA are phosphatase inhibitors that specifically inhibit the PPP2R2D (PR55-delta) subunit of PP2A. Inactivation of PP2A during M phase is essential to keep cyclin-B1-CDK1 activity high. Following DNA damage, it is also involved in checkpoint recovery by being inhibited. This is Serine/threonine-protein kinase greatwall (MASTL) from Canis lupus familiaris (Dog).